Here is a 150-residue protein sequence, read N- to C-terminus: MQLILLQKVTNLGNLGDLVDVKPGYGRNFLVPQGKAVPATESNKAEFEAKRADYEAKAQAIHADADARKAKLEGASVTIAANASTEGKLYGSVGAREIADAFTAAGLELNKSEVILGEGAFRNIGEYDVLVHLHADVETTVKVVVEAEKA.

It belongs to the bacterial ribosomal protein bL9 family.

Binds to the 23S rRNA. The polypeptide is Large ribosomal subunit protein bL9 (Stenotrophomonas maltophilia (strain R551-3)).